The chain runs to 236 residues: Leucyl/phenylalanyl-tRNA--protein transferase (236 aa).

It belongs to the L/F-transferase family.

It is found in the cytoplasm. It carries out the reaction N-terminal L-lysyl-[protein] + L-leucyl-tRNA(Leu) = N-terminal L-leucyl-L-lysyl-[protein] + tRNA(Leu) + H(+). The enzyme catalyses N-terminal L-arginyl-[protein] + L-leucyl-tRNA(Leu) = N-terminal L-leucyl-L-arginyl-[protein] + tRNA(Leu) + H(+). It catalyses the reaction L-phenylalanyl-tRNA(Phe) + an N-terminal L-alpha-aminoacyl-[protein] = an N-terminal L-phenylalanyl-L-alpha-aminoacyl-[protein] + tRNA(Phe). In terms of biological role, functions in the N-end rule pathway of protein degradation where it conjugates Leu, Phe and, less efficiently, Met from aminoacyl-tRNAs to the N-termini of proteins containing an N-terminal arginine or lysine. This is Leucyl/phenylalanyl-tRNA--protein transferase from Shewanella loihica (strain ATCC BAA-1088 / PV-4).